The following is a 188-amino-acid chain: FMN-dependent NADPH-azoreductase (188 aa).

It belongs to the azoreductase type 2 family. Homotetramer. The cofactor is FMN.

Its function is as follows. Catalyzes the reductive cleavage of azo bond in aromatic azo compounds to the corresponding amines. Requires NADPH, but not NADH, as an electron donor for its activity. The sequence is that of FMN-dependent NADPH-azoreductase (azo1) from Staphylococcus haemolyticus (strain JCSC1435).